A 63-amino-acid chain; its full sequence is MEWKLNLLLYLALFFFLLFLLFLLLFVVIKQLKNSVANTAGTLQPGRLSLHREPWGFNNEQAV.

2 important for interaction with SLC2A1 and SLC2A3 regions span residues 7–29 and 51–57; these read LLLYLALFFFLLFLLFLLLFVVI and HREPWGF. Residues 9 to 29 form a helical membrane-spanning segment; the sequence is LYLALFFFLLFLLFLLLFVVI.

Interacts with glucose transporters SLC2A1/GLUT1 and SLC2A3/GLUT3; the interactions may promote SLC2A1- and SLC2A3-mediated glucose transport to meet the energy needs of mesendoderm differentiation. As to expression, accumulates in the posterior primitive streak of mid-gastrulation embryos at 7.0 dpc. In the adult, highly abundant and enriched in the brain compared to other organs.

It localises to the cell membrane. Functionally, required for mesendoderm differentiation. Interacts with glucose transporters and promotes glucose uptake. Probably augments the glucose uptake capacity of glucose transporter proteins to meet the energy needs of mesendoderm differentiation. The sequence is that of Small integral membrane protein 43 from Mus musculus (Mouse).